The sequence spans 229 residues: GTP cyclohydrolase 1 (229 aa).

The Zn(2+) site is built by Cys116, His119, and Cys187.

It belongs to the GTP cyclohydrolase I family. In terms of assembly, toroid-shaped homodecamer, composed of two pentamers of five dimers.

It carries out the reaction GTP + H2O = 7,8-dihydroneopterin 3'-triphosphate + formate + H(+). Its pathway is cofactor biosynthesis; 7,8-dihydroneopterin triphosphate biosynthesis; 7,8-dihydroneopterin triphosphate from GTP: step 1/1. The sequence is that of GTP cyclohydrolase 1 from Synechococcus sp. (strain JA-3-3Ab) (Cyanobacteria bacterium Yellowstone A-Prime).